We begin with the raw amino-acid sequence, 187 residues long: MSGGVKLIAGLGNPGDQYARTRHNVGAWFLETLAQQRNQSLAKENKFHGFVAKCNDYWLLKPTTFMNESGQAVAALARFYKIKPSEILIAHDELDFPAGDIRLKEGGGHGGHNGLRNIIQHLGSSDFYRLRIGINHPGHKDRVTPYVLSPPSENDRIAILAAIEKGLRLIPELVQGDFQKVMRELHS.

Y18 contacts tRNA. The active-site Proton acceptor is the H23. Positions 65, 67, and 113 each coordinate tRNA.

Belongs to the PTH family. Monomer.

It localises to the cytoplasm. The enzyme catalyses an N-acyl-L-alpha-aminoacyl-tRNA + H2O = an N-acyl-L-amino acid + a tRNA + H(+). Its function is as follows. Hydrolyzes ribosome-free peptidyl-tRNAs (with 1 or more amino acids incorporated), which drop off the ribosome during protein synthesis, or as a result of ribosome stalling. In terms of biological role, catalyzes the release of premature peptidyl moieties from peptidyl-tRNA molecules trapped in stalled 50S ribosomal subunits, and thus maintains levels of free tRNAs and 50S ribosomes. This chain is Peptidyl-tRNA hydrolase, found in Coxiella burnetii (strain CbuG_Q212) (Coxiella burnetii (strain Q212)).